A 323-amino-acid chain; its full sequence is Probable cell division protein WhiA (323 aa).

Positions 279–313 (TLKELGEMVSGGKISKSGINHRLRKLDEIAERLRA) form a DNA-binding region, H-T-H motif.

This sequence belongs to the WhiA family.

Functionally, involved in cell division and chromosome segregation. The sequence is that of Probable cell division protein WhiA from Anoxybacillus flavithermus (strain DSM 21510 / WK1).